Consider the following 209-residue polypeptide: Redox-sensing transcriptional repressor Rex (209 aa).

Residues 16-55 constitute a DNA-binding region (H-T-H motif); sequence LYYRFIQNLSLSGKQRVSSAELSEAVKVDSATIRRDFSYF. An NAD(+)-binding site is contributed by 90-95; that stretch reads GVGNLG.

This sequence belongs to the transcriptional regulatory Rex family. In terms of assembly, homodimer.

The protein resides in the cytoplasm. Its function is as follows. Modulates transcription in response to changes in cellular NADH/NAD(+) redox state. In Bacillus mycoides (strain KBAB4) (Bacillus weihenstephanensis), this protein is Redox-sensing transcriptional repressor Rex.